The chain runs to 188 residues: ATP synthase subunit b (188 aa).

A helical membrane pass occupies residues 30–50 (IVWSLIPFLIILIVFWKLVLP).

This sequence belongs to the ATPase B chain family. In terms of assembly, F-type ATPases have 2 components, F(1) - the catalytic core - and F(0) - the membrane proton channel. F(1) has five subunits: alpha(3), beta(3), gamma(1), delta(1), epsilon(1). F(0) has three main subunits: a(1), b(2) and c(10-14). The alpha and beta chains form an alternating ring which encloses part of the gamma chain. F(1) is attached to F(0) by a central stalk formed by the gamma and epsilon chains, while a peripheral stalk is formed by the delta and b chains.

It localises to the cell membrane. In terms of biological role, f(1)F(0) ATP synthase produces ATP from ADP in the presence of a proton or sodium gradient. F-type ATPases consist of two structural domains, F(1) containing the extramembraneous catalytic core and F(0) containing the membrane proton channel, linked together by a central stalk and a peripheral stalk. During catalysis, ATP synthesis in the catalytic domain of F(1) is coupled via a rotary mechanism of the central stalk subunits to proton translocation. Component of the F(0) channel, it forms part of the peripheral stalk, linking F(1) to F(0). The chain is ATP synthase subunit b from Corynebacterium glutamicum (strain R).